Here is a 408-residue protein sequence, read N- to C-terminus: UPF0761 membrane protein NMCC_0461 (408 aa).

The next 6 membrane-spanning stretches (helical) occupy residues 43–63 (LLALVPVLTVMVAVASIFPVF), 100–120 (LTAIGSVMLVVTSLMLIRTID), 139–159 (FLVYWALLTFGPLSLGVGISF), 176–196 (WSGALRTAATLTFMTLLLWGL), 210–230 (AFVGALATAFCLETARSLFTW), and 248–268 (VPFFLLWLNLLWTLVLGGAVL).

Belongs to the UPF0761 family.

The protein localises to the cell inner membrane. This Neisseria meningitidis serogroup C (strain 053442) protein is UPF0761 membrane protein NMCC_0461.